The sequence spans 1235 residues: ATP-dependent helicase/nuclease subunit A (1235 aa).

The 471-residue stretch at 12 to 482 (ALWTDDQWKA…IDLSQNFRSR (471 aa)) folds into the UvrD-like helicase ATP-binding domain. 33–40 (AAAGSGKT) serves as a coordination point for ATP. A UvrD-like helicase C-terminal domain is found at 509–800 (AAELTLGASF…RMMTIHASKG (292 aa)).

It belongs to the helicase family. AddA subfamily. Heterodimer of AddA and AddB/RexB. The cofactor is Mg(2+).

It carries out the reaction Couples ATP hydrolysis with the unwinding of duplex DNA by translocating in the 3'-5' direction.. The enzyme catalyses ATP + H2O = ADP + phosphate + H(+). The heterodimer acts as both an ATP-dependent DNA helicase and an ATP-dependent, dual-direction single-stranded exonuclease. Recognizes the chi site generating a DNA molecule suitable for the initiation of homologous recombination. The AddA nuclease domain is required for chi fragment generation; this subunit has the helicase and 3' -&gt; 5' nuclease activities. This chain is ATP-dependent helicase/nuclease subunit A, found in Listeria innocua serovar 6a (strain ATCC BAA-680 / CLIP 11262).